Consider the following 1616-residue polypeptide: S-layer-related protein (1616 aa).

Residues 1–30 form the signal peptide; the sequence is MKSLLRKWNGMMIIALVISLLTPAWGKASA. The BIG2 domain occupies 1115 to 1185; that stretch reads VKALKLDRGT…GSGTVQATYE (71 aa). Disordered regions lie at residues 1191–1244, 1372–1455, 1523–1554, and 1585–1616; these read ARVS…DGRN, NKRN…GRAR, ARGRFRNRGVPTRRGADTRTDERDAHARREAG, and FAGGGSRPAGRTRGRTLRARPARLPVRKARPC. Gly residues predominate over residues 1199 to 1225; that stretch reads STGGGSDTGSGTGSGSGGGSAGGGGTA. Basic residues predominate over residues 1372-1387; sequence NKRNRRLRKLRPKNRK. Low complexity predominate over residues 1406–1416; it reads PPECSASCPPA. The SLH domain occupies 1438–1502; the sequence is WSPPRSASPT…ALDPAPAAAD (65 aa). The segment covering 1536-1554 has biased composition (basic and acidic residues); that stretch reads RGADTRTDERDAHARREAG. A compositionally biased stretch (basic residues) spans 1594-1616; the sequence is GRTRGRTLRARPARLPVRKARPC.

The protein resides in the secreted. It localises to the cell wall. Its subcellular location is the S-layer. Functionally, the S-layer is a paracrystalline mono-layered assembly of proteins which coats the surface of bacteria. May play a role in the export of butirosin from the organism. The polypeptide is S-layer-related protein (butB) (Niallia circulans (Bacillus circulans)).